Reading from the N-terminus, the 360-residue chain is Phosphate acyltransferase (360 aa).

Belongs to the PlsX family. As to quaternary structure, homodimer. Probably interacts with PlsY.

It localises to the cytoplasm. It catalyses the reaction a fatty acyl-[ACP] + phosphate = an acyl phosphate + holo-[ACP]. It participates in lipid metabolism; phospholipid metabolism. Functionally, catalyzes the reversible formation of acyl-phosphate (acyl-PO(4)) from acyl-[acyl-carrier-protein] (acyl-ACP). This enzyme utilizes acyl-ACP as fatty acyl donor, but not acyl-CoA. This Janthinobacterium sp. (strain Marseille) (Minibacterium massiliensis) protein is Phosphate acyltransferase.